The following is a 296-amino-acid chain: MAMVEMQTTAALAESRRKMQARRRLKNRIALTLSMATMAFGLFWLIWILMSTITRGIDGMSLALFTEMTPPPNTEGGGLANALAGSGLLILWATVFGTPLGIMAGIYLAEYGRKSWLAEVIRFINDILLSAPSIVVGLFVYTIVVAQMEHFSGWAGVIALALLQVPIVIRTTENMLKLVPYSLREAAYALGTPKWKMISAITLKASVSGIMTGILLAIARIAGETAPLLFTALSNQFWSTDMMQPIANLPVTIFKFAMSPFAEWQQLAWAGVLIITLCVLLLNILARVVFAKNKHG.

Residues 1-28 lie on the Cytoplasmic side of the membrane; the sequence is MAMVEMQTTAALAESRRKMQARRRLKNR. The helical transmembrane segment at 29-50 threads the bilayer; the sequence is IALTLSMATMAFGLFWLIWILM. At 51–82 the chain is on the periplasmic side; that stretch reads STITRGIDGMSLALFTEMTPPPNTEGGGLANA. A helical membrane pass occupies residues 83 to 102; the sequence is LAGSGLLILWATVFGTPLGI. In terms of domain architecture, ABC transmembrane type-1 spans 83 to 286; that stretch reads LAGSGLLILW…LCVLLLNILA (204 aa). Over 103–126 the chain is Cytoplasmic; that stretch reads MAGIYLAEYGRKSWLAEVIRFIND. Residues 127–146 traverse the membrane as a helical segment; it reads ILLSAPSIVVGLFVYTIVVA. The Periplasmic segment spans residues 147–150; sequence QMEH. The helical transmembrane segment at 151 to 169 threads the bilayer; it reads FSGWAGVIALALLQVPIVI. The Cytoplasmic segment spans residues 170 to 204; it reads RTTENMLKLVPYSLREAAYALGTPKWKMISAITLK. The chain crosses the membrane as a helical span at residues 205–223; that stretch reads ASVSGIMTGILLAIARIAG. At 224–266 the chain is on the periplasmic side; that stretch reads ETAPLLFTALSNQFWSTDMMQPIANLPVTIFKFAMSPFAEWQQ. The helical transmembrane segment at 267–286 threads the bilayer; that stretch reads LAWAGVLIITLCVLLLNILA. Topologically, residues 287 to 296 are cytoplasmic; sequence RVVFAKNKHG.

It belongs to the binding-protein-dependent transport system permease family. CysTW subfamily.

Its subcellular location is the cell inner membrane. Functionally, part of the binding-protein-dependent transport system for phosphate; probably responsible for the translocation of the substrate across the membrane. This chain is Phosphate transport system permease protein PstA (pstA), found in Escherichia coli (strain K12).